Consider the following 384-residue polypeptide: Dimethyladenosine transferase (384 aa).

The tract at residues 1 to 24 is disordered; it reads MPKTAKNKRNNAASGPYDKKSKGS. Residues His39, Leu41, Gly66, Glu87, Asp115, and Asn131 each contribute to the S-adenosyl-L-methionine site. Positions 289 to 309 are disordered; the sequence is MDANSDTDNDNDGDAMEEDDD.

The protein belongs to the class I-like SAM-binding methyltransferase superfamily. rRNA adenine N(6)-methyltransferase family.

It is found in the cytoplasm. The protein localises to the nucleus. Its subcellular location is the nucleolus. The catalysed reaction is adenosine(1779)/adenosine(1780) in 18S rRNA + 4 S-adenosyl-L-methionine = N(6)-dimethyladenosine(1779)/N(6)-dimethyladenosine(1780) in 18S rRNA + 4 S-adenosyl-L-homocysteine + 4 H(+). Functionally, specifically dimethylates two adjacent adenosines in the loop of a conserved hairpin near the 3'-end of 18S rRNA in the 40S particle. The chain is Dimethyladenosine transferase (DIM1) from Chaetomium thermophilum (strain DSM 1495 / CBS 144.50 / IMI 039719) (Thermochaetoides thermophila).